Consider the following 87-residue polypeptide: MAERRKYKKRYCKYCEAKVDFMDYKDVGALRFSLSERYKIMPRRLTGNCKRHQDMIATVIKRARAAALVPYTVTRNTVVTAPFENLR.

This sequence belongs to the bacterial ribosomal protein bS18 family. In terms of assembly, part of the 30S ribosomal subunit. Forms a tight heterodimer with protein bS6.

Functionally, binds as a heterodimer with protein bS6 to the central domain of the 16S rRNA, where it helps stabilize the platform of the 30S subunit. This is Small ribosomal subunit protein bS18 from Sulfurimonas denitrificans (strain ATCC 33889 / DSM 1251) (Thiomicrospira denitrificans (strain ATCC 33889 / DSM 1251)).